The following is a 189-amino-acid chain: Ras-like protein 1 (189 aa).

10-17 (GAGGVGKS) serves as a coordination point for GTP. Positions 32–40 (YDPTIEDSY) match the Effector region motif. GTP is bound by residues 57-61 (DTAGQ) and 116-119 (NKCD). At Cys-186 the chain carries Cysteine methyl ester. Cys-186 carries S-geranylgeranyl cysteine lipidation. Positions 187–189 (KML) are cleaved as a propeptide — removed in mature form.

Belongs to the small GTPase superfamily. Ras family.

Its subcellular location is the cell membrane. It carries out the reaction GTP + H2O = GDP + phosphate + H(+). Its activity is regulated as follows. Alternates between an inactive form bound to GDP and an active form bound to GTP. Activated by a guanine nucleotide-exchange factor (GEF) and inactivated by a GTPase-activating protein (GAP). Ras proteins bind GDP/GTP and possess intrinsic GTPase activity. Plays a role in eye development by regulating cell growth, survival of postmitotic ommatidial cells and differentiation of photoreceptor cells. During larval development, mediates Ptth/tor signaling leading to the production of ecdysone, a hormone required for the initiation of metamorphosis. This Drosophila virilis (Fruit fly) protein is Ras-like protein 1.